Reading from the N-terminus, the 109-residue chain is RYamide neuropeptides (109 aa).

A signal peptide spans methionine 1–glutamine 22. Tyrosine 33 is modified (tyrosine amide). The propeptide occupies serine 36–arginine 53. Tyrosine 63 is subject to Tyrosine amide. Positions serine 67–threonine 109 are excised as a propeptide.

Its subcellular location is the secreted. In terms of biological role, neuropeptides RYamide-1 and RYamide-2 are ligands for the G-protein coupled receptor RYa-R. May suppress feeding behavior. The sequence is that of RYamide neuropeptides from Drosophila melanogaster (Fruit fly).